The primary structure comprises 346 residues: 3-keto-steroid reductase (346 aa).

Leu-16, Thr-39, and Arg-45 together coordinate NADP(+). Catalysis depends on proton donor residues Ser-178 and Tyr-201. NADP(+) is bound by residues Tyr-201, Lys-205, and Ser-236. Lys-205 acts as the Lowers pKa of active site Tyr in catalysis.

Belongs to the short-chain dehydrogenases/reductases (SDR) family. ERG27 subfamily.

It carries out the reaction a 3beta-hydroxysteroid + NADP(+) = a 3-oxosteroid + NADPH + H(+). Its pathway is steroid biosynthesis; zymosterol biosynthesis; zymosterol from lanosterol: step 5/6. Its function is as follows. Responsible for the reduction of the keto group on the C-3 of sterols. In Kluyveromyces lactis (strain ATCC 8585 / CBS 2359 / DSM 70799 / NBRC 1267 / NRRL Y-1140 / WM37) (Yeast), this protein is 3-keto-steroid reductase (ERG27).